A 264-amino-acid chain; its full sequence is Undecaprenyl-diphosphatase (264 aa).

7 helical membrane-spanning segments follow: residues 38 to 58 (RSDF…VLVF), 75 to 95 (REYV…GLVV), 106 to 126 (VSPV…VEAY), 136 to 156 (VTWT…VFPG), 181 to 201 (FVFL…FLEM), 217 to 237 (VAFL…MGYI), and 242 to 262 (FTAF…WLPS).

This sequence belongs to the UppP family.

Its subcellular location is the cell membrane. The catalysed reaction is di-trans,octa-cis-undecaprenyl diphosphate + H2O = di-trans,octa-cis-undecaprenyl phosphate + phosphate + H(+). Functionally, catalyzes the dephosphorylation of undecaprenyl diphosphate (UPP). Confers resistance to bacitracin. This is Undecaprenyl-diphosphatase from Stenotrophomonas maltophilia (strain K279a).